The primary structure comprises 337 residues: Adenosine deaminase-like protein (337 aa).

Zn(2+) is bound by residues histidine 14 and histidine 16. N(6)-methyl-AMP-binding positions include histidine 16, asparagine 18, histidine 66, 98–101, and glycine 171; that span reads TTPK. Position 198 (histidine 198) interacts with Zn(2+). 3 residues coordinate N(6)-methyl-AMP: glutamate 201, aspartate 276, and aspartate 277. Glutamate 201 (proton donor) is an active-site residue. Residue aspartate 276 coordinates Zn(2+).

This sequence belongs to the metallo-dependent hydrolases superfamily. Adenosine and AMP deaminases family. In terms of assembly, monomer. Requires Zn(2+) as cofactor.

The enzyme catalyses N(6)-methyl-AMP + H2O + H(+) = IMP + methylamine. Its function is as follows. Catalyzes the hydrolysis of the free cytosolic methylated adenosine nucleotide N(6)-methyl-AMP (N6-mAMP) to produce inositol monophosphate (IMP) and methylamine. Is required for the catabolism of cytosolic N6-mAMP, which is derived from the degradation of mRNA containing N6-methylated adenine (m6A). The sequence is that of Adenosine deaminase-like protein (Ada) from Drosophila melanogaster (Fruit fly).